Reading from the N-terminus, the 228-residue chain is PKHD-type hydroxylase YbiX (228 aa).

Positions 78–177 constitute a Fe2OG dioxygenase domain; the sequence is TLSTPLFNRY…RVASFIWIQS (100 aa). Fe cation contacts are provided by H96, D98, and H158. R168 serves as a coordination point for 2-oxoglutarate.

The cofactor is Fe(2+). L-ascorbate is required as a cofactor.

The polypeptide is PKHD-type hydroxylase YbiX (Escherichia coli O157:H7).